The chain runs to 278 residues: Glycerophosphodiester phosphodiesterase GpdQ (278 aa).

7 residues coordinate Fe cation: aspartate 8, histidine 10, aspartate 50, asparagine 80, histidine 156, histidine 195, and histidine 197.

It belongs to the cyclic nucleotide phosphodiesterase class-III family. The cofactor is Fe(2+).

The enzyme catalyses a sn-glycero-3-phosphodiester + H2O = an alcohol + sn-glycerol 3-phosphate + H(+). The catalysed reaction is sn-glycero-3-phosphoethanolamine + H2O = ethanolamine + sn-glycerol 3-phosphate + H(+). Catalyzes the hydrolysis of the 3'-5' phosphodiester bond of glycerophosphodiesters such as glycerophosphorylethanolamine (GPE), a typical phospholipid metabolite. In Enterobacter lignolyticus (strain SCF1), this protein is Glycerophosphodiester phosphodiesterase GpdQ.